The sequence spans 3564 residues: CUB and sushi domain-containing protein 1 (3564 aa).

Positions 1–29 are cleaved as a signal peptide; that stretch reads MTAWRKFKSLLLPLVLAVLCAGLLTAAKG. At 30 to 3487 the chain is on the extracellular side; it reads QNCGGLVQGP…NHYQGTSSGS (3458 aa). 10 cysteine pairs are disulfide-bonded: C32–C58, C145–C185, C171–C202, C208–C234, C349–C389, C375–C406, C411–C437, C527–C567, C553–C580, and C584–C610. The CUB 1 domain maps to 32–140; that stretch reads CGGLVQGPNG…QGFKAMYEVL (109 aa). N40 and N57 each carry an N-linked (GlcNAc...) asparagine glycan. Positions 143-204 constitute a Sushi 1 domain; that stretch reads HTCGNPGEIL…WDFPAPFCRA (62 aa). Residues 208–312 enclose the CUB 2 domain; the sequence is CGGTLRGTSG…KGFNAQFQVK (105 aa). The Sushi 2 domain maps to 347 to 408; it reads DMCPDPGIPD…WNDHRPICRA (62 aa). Positions 411-522 constitute a CUB 3 domain; that stretch reads CGSNLRGPSG…PGFKAVYQEI (112 aa). Residues 525–582 enclose the Sushi 3 domain; sequence GGCGDPGIPAYGKRTGSSFLHGDTLTFECQAAFELVGERVITCQKNNQWSGNKPSCVF. Residues 584–692 form the CUB 4 domain; the sequence is CFFNFTAPSG…RGFNITYTTF (109 aa). Residues N587 and N686 are each glycosylated (N-linked (GlcNAc...) asparagine). The Sushi 4 domain occupies 695 to 756; the sequence is NECHDPGIPV…WSSTVPRCEA (62 aa). Cystine bridges form between C697/C738, C723/C754, C758/C784, C873/C913, C899/C926, and C930/C956. In terms of domain architecture, CUB 5 spans 758–866; it reads CGGHLTASSG…VGFLIHYESV (109 aa). Residues 871-928 form the Sushi 5 domain; it reads DSCLDPGIPVNGQRHGSNFGIRSTVTFSCDPGYTLSDDEPLVCEKNHQWNHALPSCDA. The CUB 6 domain maps to 930-1040; the sequence is CGGYIHGKSG…EGFNITFAEY (111 aa). Residues N955, N1015, and N1034 are each glycosylated (N-linked (GlcNAc...) asparagine). The region spanning 1043–1102 is the Sushi 6 domain; the sequence is EPCDDPGVPAFSRRIGFQFGVGDTLAFTCFQGYRLEGATKLTCLGGGRRVWSAPLPRCVA. 3 disulfides stabilise this stretch: C1045/C1085, C1071/C1100, and C1104/C1130. Residues 1104-1212 enclose the CUB 7 domain; sequence CGASVKGNEG…QGFQLTYTSF (109 aa). 2 N-linked (GlcNAc...) asparagine glycosylation sites follow: N1184 and N1197. A Sushi 7 domain is found at 1215–1275; that stretch reads VKCEDPGIPN…WDKPMPSCVA (61 aa). Disulfide bonds link C1217/C1258, C1244/C1273, C1277/C1304, C1391/C1431, C1417/C1447, C1451/C1477, C1564/C1604, C1590/C1621, C1625/C1651, C1741/C1781, C1767/C1798, and C1802/C1828. The 110-residue stretch at 1277–1386 folds into the CUB 8 domain; sequence CGGLVHAATS…SGFSIQFSTS (110 aa). Positions 1389–1449 constitute a Sushi 8 domain; that stretch reads STCNDPGMPQ…WQPDPPSCIA (61 aa). A glycan (N-linked (GlcNAc...) asparagine) is linked at N1399. One can recognise a CUB 9 domain in the interval 1451–1559; it reads CGGNLTGPAG…SGFAIEFKEK (109 aa). N1454 and N1572 each carry an N-linked (GlcNAc...) asparagine glycan. In terms of domain architecture, Sushi 9 spans 1562-1623; that stretch reads EACFDPGNIM…WDRALPACQA (62 aa). A CUB 10 domain is found at 1625–1733; that stretch reads CGGQYTGSEG…RGFHFVYQAV (109 aa). N1644 is a glycosylation site (N-linked (GlcNAc...) asparagine). One can recognise a Sushi 10 domain in the interval 1739–1800; it reads TQCSSVPEPR…WNDTIPSCVV (62 aa). 3 N-linked (GlcNAc...) asparagine glycosylation sites follow: N1792, N1805, and N1882. The CUB 11 domain maps to 1802–1910; the sequence is CSGNFTQRRG…AGFHLEYKTV (109 aa). Residues 1913 to 1972 form the Sushi 11 domain; that stretch reads AACQEPALPSNGIKIGDRYMVNDVLSFQCEPGYTLQGRSHISCMPGTVRRWNYPSPLCIA. 3 disulfide bridges follow: C1915–C1955, C1941–C1970, and C1974–C2000. The region spanning 1974–2082 is the CUB 12 domain; the sequence is CGGTLTSMSG…QGFKLSYQAY (109 aa). N-linked (GlcNAc...) asparagine glycosylation is present at N2018. The Sushi 12 domain maps to 2085–2144; that stretch reads QNCPDPPAFQNGFMINSDYSVGQSISFECYPGYILLGHPVLTCQHGTDRNWNYPFPRCDA. Disulfide bonds link C2087–C2127, C2113–C2142, and C2146–C2172. In terms of domain architecture, CUB 13 spans 2146-2257; it reads CGYNVTSQNG…LNFHAFQLKR (112 aa). N-linked (GlcNAc...) asparagine glycosylation is found at N2149, N2154, and N2187. Residues 2256–2317 enclose the Sushi 13 domain; it reads KRCPPPPAVP…FQGSPPTCEA (62 aa). Intrachain disulfides connect C2258–C2300, C2286–C2315, and C2319–C2347. The CUB 14 domain occupies 2319-2430; it reads CPANEVRTES…KGFKIRYAAP (112 aa). 6 N-linked (GlcNAc...) asparagine glycosylation sites follow: N2358, N2394, N2400, N2445, N2470, and N2503. 15 consecutive Sushi domains span residues 2430 to 2492, 2493 to 2554, 2555 to 2619, 2620 to 2677, 2678 to 2735, 2736 to 2793, 2794 to 2856, 2857 to 2914, 2918 to 2975, 2976 to 3034, 3035 to 3094, 3095 to 3152, 3153 to 3210, 3214 to 3272, and 3273 to 3332; these read PYCS…LCQA, VSCG…TCKP, VPCP…RCKV, ISCG…RCLA, GHCG…VCVP, ITCG…ICRV, VNCS…KCLA, ISCG…HCSG, GFCG…VCEA, VSCG…DCTI, ISCG…LCKA, VLCN…QCLP, VFCG…TCID, TACP…ECIP, and HACR…VCKS. 12 disulfides stabilise this stretch: C2432/C2473, C2459/C2490, C2495/C2537, C2521/C2552, C2557/C2602, C2588/C2617, C2622/C2662, C2648/C2675, C2680/C2720, C2706/C2733, C2738/C2778, and C2764/C2791. N-linked (GlcNAc...) asparagine glycosylation occurs at N2605. 2 N-linked (GlcNAc...) asparagine glycosylation sites follow: N2750 and N2761. The N-linked (GlcNAc...) asparagine glycan is linked to N2795. Cystine bridges form between C2796-C2841, C2827-C2854, C2859-C2899, C2885-C2912, C2920-C2960, C2946-C2973, C2978-C3019, C3005-C3032, C3037-C3079, C3063-C3092, C3097-C3137, C3123-C3150, C3155-C3195, C3181-C3208, C3216-C3257, C3243-C3270, C3275-C3317, and C3302-C3330. N2894 is a glycosylation site (N-linked (GlcNAc...) asparagine). N-linked (GlcNAc...) asparagine glycosylation occurs at N2963. 3 N-linked (GlcNAc...) asparagine glycosylation sites follow: N3022, N3056, and N3086. N-linked (GlcNAc...) asparagine glycans are attached at residues N3228 and N3260. N-linked (GlcNAc...) asparagine glycans are attached at residues N3339, N3379, and N3386. The helical transmembrane segment at 3488–3508 threads the bilayer; it reads VAAAILVPFFALILSGFAFYL. Residues 3509-3564 are Cytoplasmic-facing; sequence YKHRTRPKVQYNGYAGHENSNGQASFENPMYDTNLKPTEAKAVRFDTTLNTVCTVV.

Belongs to the CSMD family.

Its subcellular location is the membrane. In Mus musculus (Mouse), this protein is CUB and sushi domain-containing protein 1 (Csmd1).